Here is a 324-residue protein sequence, read N- to C-terminus: tRNA dimethylallyltransferase (324 aa).

17–24 (GPTASGKT) provides a ligand contact to ATP. 19-24 (TASGKT) is a binding site for substrate. Interaction with substrate tRNA regions lie at residues 42-45 (DSAL), 166-170 (QRIQR), and 251-256 (RCVGYR).

Belongs to the IPP transferase family. In terms of assembly, monomer. The cofactor is Mg(2+).

It catalyses the reaction adenosine(37) in tRNA + dimethylallyl diphosphate = N(6)-dimethylallyladenosine(37) in tRNA + diphosphate. Functionally, catalyzes the transfer of a dimethylallyl group onto the adenine at position 37 in tRNAs that read codons beginning with uridine, leading to the formation of N6-(dimethylallyl)adenosine (i(6)A). This is tRNA dimethylallyltransferase from Burkholderia mallei (strain NCTC 10247).